The chain runs to 217 residues: MGQKVHPIGLRVGIIRDWDAKWYAEKEYADYLHEDLAIRKFIQKELADASVSTIEIVRAVNKVIVSLHTAKPGMVIGKGGSNVDALRAQLNKLTGKQVHINIVEIKKPDLDAHLVGETIARQLEQRVAFRRAQKQAIQRAMRAGAKGIKTQVSGRLNGADIARAEGYSEGTVPLHTLRADIDYAWEEADTTYGKLGVKVWIYRGEVLPARKNTKGGK.

The KH type-2 domain maps to 38–106 (IRKFIQKELA…QVHINIVEIK (69 aa)).

This sequence belongs to the universal ribosomal protein uS3 family. In terms of assembly, part of the 30S ribosomal subunit. Forms a tight complex with proteins S10 and S14.

Functionally, binds the lower part of the 30S subunit head. Binds mRNA in the 70S ribosome, positioning it for translation. The polypeptide is Small ribosomal subunit protein uS3 (Streptococcus thermophilus (strain CNRZ 1066)).